A 31-amino-acid polypeptide reads, in one-letter code: Photosystem II reaction center protein T (31 aa).

A helical membrane pass occupies residues 3–23 (SFAYILILTLAIATLFFAIAF).

This sequence belongs to the PsbT family. As to quaternary structure, PSII is composed of 1 copy each of membrane proteins PsbA, PsbB, PsbC, PsbD, PsbE, PsbF, PsbH, PsbI, PsbJ, PsbK, PsbL, PsbM, PsbT, PsbX, PsbY, PsbZ, Psb30/Ycf12, peripheral proteins PsbO, CyanoQ (PsbQ), PsbU, PsbV and a large number of cofactors. It forms dimeric complexes.

Its subcellular location is the cellular thylakoid membrane. Functionally, found at the monomer-monomer interface of the photosystem II (PS II) dimer, plays a role in assembly and dimerization of PSII. PSII is a light-driven water plastoquinone oxidoreductase, using light energy to abstract electrons from H(2)O, generating a proton gradient subsequently used for ATP formation. In Synechococcus sp. (strain WH7803), this protein is Photosystem II reaction center protein T.